We begin with the raw amino-acid sequence, 255 residues long: MTGPPAPAARPAEPDDPTVVAVERDASGRHLARELSPGAFLAPRPLLPCADRLRIALVGTRAGLLAGDDLRLHVSVGPGARLDLVEPSGLVAYDHRGGRSAWRARIDIAAGGRLDWDGKPFVVAHGAWVDRTMEVTLAPGARMLWRDTLVLGRSGERGGRVRTRTRAEYDGRELLVEDLDLTDPDIRELPGVLGPNRIVGSVTALGTRPPGPPHPYRTDLAGPGAQVRLLDTEAPAMEAELSALCEHWRTENDHA.

Belongs to the UreD family. In terms of assembly, ureD, UreF and UreG form a complex that acts as a GTP-hydrolysis-dependent molecular chaperone, activating the urease apoprotein by helping to assemble the nickel containing metallocenter of UreC. The UreE protein probably delivers the nickel.

The protein resides in the cytoplasm. In terms of biological role, required for maturation of urease via the functional incorporation of the urease nickel metallocenter. The chain is Urease accessory protein UreD 1 from Streptomyces griseus subsp. griseus (strain JCM 4626 / CBS 651.72 / NBRC 13350 / KCC S-0626 / ISP 5235).